The chain runs to 356 residues: Probable scoulerine-9-O-methyltransferase OMT2B (356 aa).

Residue Met173 coordinates S-adenosyl-L-methionine. Asp176 serves as a coordination point for substrate. Residues Thr177, Gly202, Asp225, 245-246, and Lys259 each bind S-adenosyl-L-methionine; that span reads DI. 260–264 contacts substrate; sequence YVLHN. The active-site Proton acceptor is the His263.

The protein belongs to the class I-like SAM-binding methyltransferase superfamily. Cation-independent O-methyltransferase family. COMT subfamily.

It catalyses the reaction (S)-scoulerine + S-adenosyl-L-methionine = (S)-tetrahydrocolumbamine + S-adenosyl-L-homocysteine + H(+). Its pathway is alkaloid biosynthesis. Methyltransferase involved in the biosynthesis of the benzylisoquinoline alkaloid noscapine. Catalyzes the conversion of (S)-scoulerine to (S)-tetrahydrocolumbamine. The heterodimers OMT2B-SOMT3 and OMT2B-6OMT do not possess 3-O-acetyl-4'-O-demethylpapaveroxine 4'-O-methyltransferase activity. The chain is Probable scoulerine-9-O-methyltransferase OMT2B from Papaver somniferum (Opium poppy).